A 514-amino-acid chain; its full sequence is 1,25-dihydroxyvitamin D(3) 24-hydroxylase, mitochondrial (514 aa).

The N-terminal 35 residues, 1–35 (MSCPIDKRRPLIAFLRRLRDLGQPPRSVTSKAHVK), are a transit peptide targeting the mitochondrion. Cys462 contributes to the heme binding site.

This sequence belongs to the cytochrome P450 family. Requires heme as cofactor.

It is found in the mitochondrion. The enzyme catalyses calcitriol + 2 reduced [adrenodoxin] + O2 + 2 H(+) = calcitetrol + 2 oxidized [adrenodoxin] + H2O. It catalyses the reaction calcitetrol + 2 reduced [adrenodoxin] + O2 + 2 H(+) = (1S)-1,25-dihydroxy-24-oxocalciol + 2 oxidized [adrenodoxin] + 2 H2O. It carries out the reaction (1S)-1,25-dihydroxy-24-oxocalciol + 2 reduced [adrenodoxin] + O2 + 2 H(+) = (1S)-1,23,25-trihydroxy-24-oxocalciol + 2 oxidized [adrenodoxin] + H2O. The catalysed reaction is (1S)-1,23-dihydroxy-24,25,26,27-tetranorcalciol + 2 reduced [adrenodoxin] + O2 + 2 H(+) = (1S)-1-hydroxy-23-oxo-24,25,26,27-tetranorcalciol + 2 oxidized [adrenodoxin] + 2 H2O. The enzyme catalyses (1S)-1-hydroxy-23-oxo-24,25,26,27-tetranorcalciol + 2 reduced [adrenodoxin] + O2 + H(+) = calcitroate + 2 oxidized [adrenodoxin] + H2O. It catalyses the reaction calcidiol + 2 reduced [adrenodoxin] + O2 + 2 H(+) = secalciferol + 2 oxidized [adrenodoxin] + H2O. It carries out the reaction secalciferol + 2 reduced [adrenodoxin] + O2 + 2 H(+) = 25-hydroxy-24-oxocalciol + 2 oxidized [adrenodoxin] + 2 H2O. The catalysed reaction is 25-hydroxy-24-oxocalciol + 2 reduced [adrenodoxin] + O2 + 2 H(+) = 23S,25-dihydroxy-24-oxocholecalciferol + 2 oxidized [adrenodoxin] + H2O. The enzyme catalyses 20S,23-dihydroxycholecalciferol + 2 reduced [adrenodoxin] + O2 + 2 H(+) = 20S,23,25-trihydroxycholecalciferol + 2 oxidized [adrenodoxin] + H2O. It catalyses the reaction 20S,23-dihydroxycholecalciferol + 2 reduced [adrenodoxin] + O2 + 2 H(+) = 20S,23,24-trihydroxycholecalciferol + 2 oxidized [adrenodoxin] + H2O. It carries out the reaction 20S-hydroxycholecalciferol + 2 reduced [adrenodoxin] + O2 + 2 H(+) = 20S,25-dihydroxycholecalciferol + 2 oxidized [adrenodoxin] + H2O. The catalysed reaction is 20S-hydroxycholecalciferol + 2 reduced [adrenodoxin] + O2 + 2 H(+) = 20S,24S-dihydroxycholecalciferol + 2 oxidized [adrenodoxin] + H2O. The enzyme catalyses 20S-hydroxycholecalciferol + 2 reduced [adrenodoxin] + O2 + 2 H(+) = 20S,24R-dihydroxycholecalciferol + 2 oxidized [adrenodoxin] + H2O. Functionally, a cytochrome P450 monooxygenase with a key role in vitamin D catabolism and calcium homeostasis. Via C24-oxidation pathway, catalyzes the inactivation of both the vitamin D precursor calcidiol (25-hydroxyvitamin D(3)) and the active hormone calcitriol (1-alpha,25-dihydroxyvitamin D(3)). With initial hydroxylation at C-24 (via C24-oxidation pathway), performs a sequential 6-step oxidation of calcitriol leading to the formation of the biliary metabolite calcitroic acid. Hydroxylates at C-24 or C-25 other vitamin D active metabolites, such as CYP11A1-derived secosteroids 20S-hydroxycholecalciferol and 20S,23-dihydroxycholecalciferol. Mechanistically, uses molecular oxygen inserting one oxygen atom into a substrate, and reducing the second into a water molecule, with two electrons provided by NADPH via FDXR/adrenodoxin reductase and FDX1/adrenodoxin. The chain is 1,25-dihydroxyvitamin D(3) 24-hydroxylase, mitochondrial from Mus musculus (Mouse).